Reading from the N-terminus, the 348-residue chain is Isopentenyl-diphosphate delta-isomerase (348 aa).

9 to 10 serves as a coordination point for substrate; the sequence is RK. FMN is bound by residues 68–70, Ser98, and Asn127; that span reads AMT. Gln157 is a binding site for substrate. A Mg(2+)-binding site is contributed by Glu158. FMN is bound by residues Lys188, Ser213, Thr218, and 286–287; that span reads AG.

It belongs to the IPP isomerase type 2 family. As to quaternary structure, homooctamer. Dimer of tetramers. Requires FMN as cofactor. NADPH is required as a cofactor. The cofactor is Mg(2+).

It is found in the cytoplasm. It carries out the reaction isopentenyl diphosphate = dimethylallyl diphosphate. Its function is as follows. Involved in the biosynthesis of isoprenoids. Catalyzes the 1,3-allylic rearrangement of the homoallylic substrate isopentenyl (IPP) to its allylic isomer, dimethylallyl diphosphate (DMAPP). This Limosilactobacillus reuteri (strain DSM 20016) (Lactobacillus reuteri) protein is Isopentenyl-diphosphate delta-isomerase.